The chain runs to 499 residues: Alpha-amylase B (499 aa).

Residues 1 to 21 form the signal peptide; it reads MMVAWWSLFLYGLQVAAPALA. Residues Cys51 and Cys59 are joined by a disulfide bond. The substrate site is built by Gln56 and Trp104. Ca(2+) is bound at residue Asn142. His143 provides a ligand contact to substrate. A disulfide bond links Cys171 and Cys185. Residues Glu183 and Asp196 each coordinate Ca(2+). An N-linked (GlcNAc...) asparagine glycan is attached at Asn218. Residue Arg225 participates in substrate binding. Residues Asp227, His231, and Glu251 each contribute to the Ca(2+) site. Residue Asp227 is the Nucleophile of the active site. Substrate is bound at residue 230 to 231; the sequence is KH. Glu251 acts as the Proton donor in catalysis. Gly255 lines the substrate pocket. Residues Cys261 and Cys304 are joined by a disulfide bond. Residues Asp318 and Arg365 each contribute to the substrate site. Cys461 and Cys496 are disulfide-bonded.

This sequence belongs to the glycosyl hydrolase 13 family. It depends on Ca(2+) as a cofactor.

The enzyme catalyses Endohydrolysis of (1-&gt;4)-alpha-D-glucosidic linkages in polysaccharides containing three or more (1-&gt;4)-alpha-linked D-glucose units.. This Aspergillus awamori (Black koji mold) protein is Alpha-amylase B (amyB).